We begin with the raw amino-acid sequence, 364 residues long: MANKTVLFNKHLESNGKMVDFHGWDMPLNYGSQIEEHHAVRQDAGMFDVSHMTVVDVIGDDACAFLRKLLANDVAKLKVPGKALYGGMLDHNGGVIDDLITYYLSDTEYRIVVNSATREKDLAWINEQVNGFSVEVTERPELAMIAVQGPNAKAKAATVFNAEQNAAIEGMKPFFGVQTGSLFIATTGYTGETGYEVIVPEADAEALWQAFLEAGIKPCGLGARDTLRLEAGMNLYGLDMDESVNPLAANMGWTVAWEPADRDFNGRQALEKIKAEGTDKLVGLIMDAKGVIRHGMSVFFTDSDGVEQQGIITSGTFSPTLGYSIAMARVPRSIGDVAEVEMRKKRVPVKVIAPSFVRNGKQAF.

The protein belongs to the GcvT family. In terms of assembly, the glycine cleavage system is composed of four proteins: P, T, L and H.

It carries out the reaction N(6)-[(R)-S(8)-aminomethyldihydrolipoyl]-L-lysyl-[protein] + (6S)-5,6,7,8-tetrahydrofolate = N(6)-[(R)-dihydrolipoyl]-L-lysyl-[protein] + (6R)-5,10-methylene-5,6,7,8-tetrahydrofolate + NH4(+). Functionally, the glycine cleavage system catalyzes the degradation of glycine. This chain is Aminomethyltransferase, found in Shewanella halifaxensis (strain HAW-EB4).